We begin with the raw amino-acid sequence, 267 residues long: Integral membrane protein 2C (267 aa).

At T37 the chain carries Phosphothreonine. A helical; Signal-anchor for type II membrane protein membrane pass occupies residues 55–75 (VGGVCYLSMGMVVLLMGLVFA). One can recognise a BRICHOS domain in the interval 136–230 (FGGGDPADII…LCNGKDTYRL (95 aa)). C163 and C222 form a disulfide bridge. N169 carries an N-linked (GlcNAc...) asparagine glycan.

Belongs to the ITM2 family. In terms of assembly, interacts with BACE1. Interacts with APP. Interacts with STMN2. In terms of processing, type I membrane-bound, as well as soluble, furin has a pre-eminent role in ITM2C proteolytic processing. PCSK7 and PCSK5 may also be involved although to a lesser extent. The soluble form of PCSK7 is incapable of processing ITM2C. Fails to undergo shedding by ADAM10 and intramembrane cleavage by SPPL2B.

The protein resides in the lysosome membrane. It is found in the cell membrane. Its function is as follows. Negative regulator of amyloid-beta peptide production. May inhibit the processing of APP by blocking its access to alpha- and beta-secretase. Binding to the beta-secretase-cleaved APP C-terminal fragment is negligible, suggesting that ITM2C is a poor gamma-secretase cleavage inhibitor. May play a role in TNF-induced cell death and neuronal differentiation. This Pongo abelii (Sumatran orangutan) protein is Integral membrane protein 2C (ITM2C).